The chain runs to 56 residues: PI-stichotoxin-Hmg3b (56 aa).

A BPTI/Kunitz inhibitor domain is found at 4–54 (CLEPKVVGPCKAGIRRFYFDSETGKCTLFLYGGCKGNGNNFETLHACRAIC). 3 disulfide bridges follow: cysteine 4-cysteine 54, cysteine 13-cysteine 37, and cysteine 29-cysteine 50.

Belongs to the venom Kunitz-type family. Sea anemone type 2 potassium channel toxin subfamily. Contains three disulfide bonds.

The protein resides in the secreted. The protein localises to the nematocyst. Functionally, serine protease inhibitor. The polypeptide is PI-stichotoxin-Hmg3b (Heteractis magnifica (Magnificent sea anemone)).